The sequence spans 167 residues: NAD(P)H-quinone oxidoreductase subunit I, chloroplastic (167 aa).

2 consecutive 4Fe-4S ferredoxin-type domains span residues 55 to 84 and 95 to 124; these read GRIH…VDWK and LNYS…MTEE. Positions 64, 67, 70, 74, 104, 107, 110, and 114 each coordinate [4Fe-4S] cluster.

This sequence belongs to the complex I 23 kDa subunit family. NDH is composed of at least 16 different subunits, 5 of which are encoded in the nucleus. The cofactor is [4Fe-4S] cluster.

Its subcellular location is the plastid. It localises to the chloroplast thylakoid membrane. It catalyses the reaction a plastoquinone + NADH + (n+1) H(+)(in) = a plastoquinol + NAD(+) + n H(+)(out). It carries out the reaction a plastoquinone + NADPH + (n+1) H(+)(in) = a plastoquinol + NADP(+) + n H(+)(out). NDH shuttles electrons from NAD(P)H:plastoquinone, via FMN and iron-sulfur (Fe-S) centers, to quinones in the photosynthetic chain and possibly in a chloroplast respiratory chain. The immediate electron acceptor for the enzyme in this species is believed to be plastoquinone. Couples the redox reaction to proton translocation, and thus conserves the redox energy in a proton gradient. This chain is NAD(P)H-quinone oxidoreductase subunit I, chloroplastic, found in Draba nemorosa (Woodland whitlowgrass).